A 454-amino-acid chain; its full sequence is Laccase-3 (454 aa).

Plastocyanin-like domains are found at residues 1–95 and 101–252; these read PGPT…GPAT and DLGV…YSGA. A glycan (N-linked (GlcNAc...) asparagine) is linked at Asn24. Positions 29, 31, 73, and 75 each coordinate Cu cation. Asn138, Asn169, Asn218, Asn314, and Asn334 each carry an N-linked (GlcNAc...) asparagine glycan. The Plastocyanin-like 3 domain occupies 319 to 454; sequence DVDWKKPILQ…SEGLAVQFQG (136 aa). His375, His378, and His380 together coordinate Cu cation. The N-linked (GlcNAc...) asparagine glycan is linked to Asn395. Residues His437, Cys438, His439, and His443 each contribute to the Cu cation site.

It belongs to the multicopper oxidase family. Requires Cu cation as cofactor.

Its subcellular location is the secreted. The catalysed reaction is 4 hydroquinone + O2 = 4 benzosemiquinone + 2 H2O. In terms of biological role, lignin degradation and detoxification of lignin-derived products. The sequence is that of Laccase-3 (lcc3) from Botryotinia fuckeliana (Noble rot fungus).